The following is a 185-amino-acid chain: Neuronal vesicle trafficking-associated protein 1 (185 aa).

The Cytoplasmic portion of the chain corresponds to 1 to 82; the sequence is MVKLGNNFAE…ITEGVTERFK (82 aa). The chain crosses the membrane as a helical; Signal-anchor for type II membrane protein span at residues 83 to 103; it reads VSVLVLFALAFLTCVVFLVVY. Residues 104 to 185 lie on the Lumenal side of the membrane; the sequence is KVYKYDRACP…QETEAAEKSA (82 aa). The interval 129-164 is required for GRIP1 interaction; sequence ESYYAEQDSSAREKFYTVINHYNLAKQSITRSVSPW.

Belongs to the NSG family. Forms a complex with GRIP1, GRIA2 and STX12 through direct interaction with GRIP1; controls the intracellular fate of AMPAR and the endosomal sorting of the GRIA2 subunit toward recycling and membrane targeting. Interacts with STX12. Interacts with APP; could regulate APP processing. Interacts with FAM171A1.

Its subcellular location is the membrane. It is found in the golgi apparatus. The protein resides in the trans-Golgi network membrane. The protein localises to the endosome membrane. It localises to the cell projection. Its subcellular location is the dendrite. It is found in the early endosome membrane. The protein resides in the late endosome membrane. The protein localises to the lysosome lumen. It localises to the recycling endosome membrane. Its subcellular location is the cytoplasmic vesicle membrane. It is found in the golgi stack membrane. The protein resides in the endosome. The protein localises to the multivesicular body membrane. It localises to the endoplasmic reticulum membrane. Plays a role in the recycling mechanism in neurons of multiple receptors, including AMPAR, APP and L1CAM and acts at the level of early endosomes to promote sorting of receptors toward a recycling pathway. Regulates sorting and recycling of GRIA2 through interaction with GRIP1 and then contributes to the regulation of synaptic transmission and plasticity by affecting the recycling and targeting of AMPA receptors to the synapse. Is required for faithful sorting of L1CAM to axons by facilitating trafficking from somatodendritic early endosome or the recycling endosome. In an other hand, induces apoptosis via the activation of CASP3 in response to DNA damage. This Macaca fascicularis (Crab-eating macaque) protein is Neuronal vesicle trafficking-associated protein 1.